The chain runs to 423 residues: Serine--tRNA ligase 1 (423 aa).

An L-serine-binding site is contributed by 231-233; the sequence is TAE. 262-264 is a binding site for ATP; it reads RSE. An L-serine-binding site is contributed by E285. ATP is bound at residue 349–352; it reads EISS. S384 lines the L-serine pocket.

Belongs to the class-II aminoacyl-tRNA synthetase family. Type-1 seryl-tRNA synthetase subfamily. In terms of assembly, homodimer. The tRNA molecule binds across the dimer.

Its subcellular location is the cytoplasm. The catalysed reaction is tRNA(Ser) + L-serine + ATP = L-seryl-tRNA(Ser) + AMP + diphosphate + H(+). It carries out the reaction tRNA(Sec) + L-serine + ATP = L-seryl-tRNA(Sec) + AMP + diphosphate + H(+). Its pathway is aminoacyl-tRNA biosynthesis; selenocysteinyl-tRNA(Sec) biosynthesis; L-seryl-tRNA(Sec) from L-serine and tRNA(Sec): step 1/1. Its function is as follows. Catalyzes the attachment of serine to tRNA(Ser). Is also able to aminoacylate tRNA(Sec) with serine, to form the misacylated tRNA L-seryl-tRNA(Sec), which will be further converted into selenocysteinyl-tRNA(Sec). This chain is Serine--tRNA ligase 1, found in Enterococcus faecalis (strain ATCC 700802 / V583).